A 981-amino-acid polypeptide reads, in one-letter code: Rab3 GTPase-activating protein catalytic subunit (981 aa).

A phosphoserine mark is found at Ser-83, Ser-379, Ser-537, Ser-579, Ser-581, and Ser-590. A disordered region spans residues 592–613 (TEELKGNGQESGKKGGPKEMAN). Ser-664 is modified (phosphoserine). Thr-908 carries the phosphothreonine modification. A disordered region spans residues 908-937 (TPPEEELKRMGSPEERRQNSVSDFPPPAGR). Basic and acidic residues predominate over residues 912–925 (EELKRMGSPEERRQ).

It belongs to the Rab3-GAP catalytic subunit family. As to quaternary structure, the Rab3 GTPase-activating complex is a heterodimer composed of RAB3GAP1 and RAB3GAP2. The Rab3 GTPase-activating complex interacts with DMXL2. Interacts with LMAN1. Ubiquitous.

The protein localises to the cytoplasm. It is found in the endoplasmic reticulum. It localises to the golgi apparatus. The protein resides in the cis-Golgi network. Catalytic subunit of the Rab3 GTPase-activating (Rab3GAP) complex composed of RAB3GAP1 and RAB3GAP2, which has GTPase-activating protein (GAP) activity towards various Rab3 subfamily members (RAB3A, RAB3B, RAB3C and RAB3D), RAB5A and RAB43, and guanine nucleotide exchange factor (GEF) activity towards RAB18. As part of the Rab3GAP complex, acts as a GAP for Rab3 proteins by converting active RAB3-GTP to the inactive form RAB3-GDP. Rab3 proteins are involved in regulated exocytosis of neurotransmitters and hormones. The Rab3GAP complex, acts as a GEF for RAB18 by promoting the conversion of inactive RAB18-GDP to the active form RAB18-GTP. Recruits and stabilizes RAB18 at the cis-Golgi membrane in fibroblasts where RAB18 is most likely activated. Also involved in RAB18 recruitment at the endoplasmic reticulum (ER) membrane where it maintains proper ER structure. Required for normal eye and brain development. May participate in neurodevelopmental processes such as proliferation, migration and differentiation before synapse formation, and non-synaptic vesicular release of neurotransmitters. This is Rab3 GTPase-activating protein catalytic subunit from Homo sapiens (Human).